A 500-amino-acid polypeptide reads, in one-letter code: Flt3-interacting zinc finger protein 1 (500 aa).

An N-acetylmethionine modification is found at M1. The interval 1–24 is disordered; that stretch reads MEDSSLPVVPAPIAAPGPAPSATA. Residues 9 to 19 are compositionally biased toward pro residues; it reads VPAPIAAPGPA. 6 consecutive C2H2-type zinc fingers follow at residues 29 to 51, 57 to 79, 85 to 107, 113 to 136, 204 to 226, and 232 to 254; these read FHCS…FARH, HACP…LRSH, YRCS…QVVH, YCCL…KRQH, FACG…WAAH, and FKCP…KLTH. 2 disordered regions span residues 255-284 and 306-328; these read DLQG…ASEV and KLEA…AAAE. Polar residues predominate over residues 256 to 267; it reads LQGSNAPPTQVW. 5 C2H2-type zinc fingers span residues 336–357, 363–386, 418–440, 446–468, and 474–496; these read YQCD…LEAH, YGCG…RASH, FGCS…VLVH, FPCL…RLLH, and FPCH…LKLH. The disordered stretch occupies residues 383-415; it reads RASHGEGSGEAAPDGEGNQAAGGPGPGSSSRSK.

Interacts with FLT3 cytoplasmic catalytic domain, following receptor stimulation, in a kinase-independent manner. Does not interact with other structurally related receptor tyrosine kinases, including KIT, CSF1R and PDGFR. Interacts with NRL. As to expression, widely expressed. In the retina, highest expression in the ganglion cell layer.

Its subcellular location is the cytoplasm. The protein localises to the nucleus. Its function is as follows. May be a transcriptional repressor of NRL function in photoreceptors. Does not repress CRX-mediated transactivation. The polypeptide is Flt3-interacting zinc finger protein 1 (Fiz1) (Mus musculus (Mouse)).